The sequence spans 353 residues: Photosystem II protein D1 (353 aa).

T2 carries the post-translational modification N-acetylthreonine. T2 carries the phosphothreonine modification. 3 helical membrane-spanning segments follow: residues 29-46 (YIGW…TATS), 118-133 (HFLL…EWEL), and 142-156 (WIAV…AATA). Position 118 (H118) interacts with chlorophyll a. A pheophytin a-binding site is contributed by Y126. D170 and E189 together coordinate [CaMn4O5] cluster. A helical membrane pass occupies residues 197-218 (FHMLGVAGVFGGSLFSAMHGSL). H198 serves as a coordination point for chlorophyll a. Residues H215 and 264-265 (SF) contribute to the a quinone site. H215 provides a ligand contact to Fe cation. H272 contributes to the Fe cation binding site. The chain crosses the membrane as a helical span at residues 274–288 (FLAAWPVVGIWFTAL). Positions 332, 333, 342, and 344 each coordinate [CaMn4O5] cluster. Positions 345 to 353 (AVEAPSTIG) are excised as a propeptide.

It belongs to the reaction center PufL/M/PsbA/D family. PSII is composed of 1 copy each of membrane proteins PsbA, PsbB, PsbC, PsbD, PsbE, PsbF, PsbH, PsbI, PsbJ, PsbK, PsbL, PsbM, PsbT, PsbX, PsbY, PsbZ, Psb30/Ycf12, at least 3 peripheral proteins of the oxygen-evolving complex and a large number of cofactors. It forms dimeric complexes. The D1/D2 heterodimer binds P680, chlorophylls that are the primary electron donor of PSII, and subsequent electron acceptors. It shares a non-heme iron and each subunit binds pheophytin, quinone, additional chlorophylls, carotenoids and lipids. D1 provides most of the ligands for the Mn4-Ca-O5 cluster of the oxygen-evolving complex (OEC). There is also a Cl(-1) ion associated with D1 and D2, which is required for oxygen evolution. The PSII complex binds additional chlorophylls, carotenoids and specific lipids. serves as cofactor. In terms of processing, tyr-161 forms a radical intermediate that is referred to as redox-active TyrZ, YZ or Y-Z. Post-translationally, C-terminally processed by CTPA; processing is essential to allow assembly of the oxygen-evolving complex and thus photosynthetic growth.

It is found in the plastid. Its subcellular location is the chloroplast thylakoid membrane. It catalyses the reaction 2 a plastoquinone + 4 hnu + 2 H2O = 2 a plastoquinol + O2. Photosystem II (PSII) is a light-driven water:plastoquinone oxidoreductase that uses light energy to abstract electrons from H(2)O, generating O(2) and a proton gradient subsequently used for ATP formation. It consists of a core antenna complex that captures photons, and an electron transfer chain that converts photonic excitation into a charge separation. The D1/D2 (PsbA/PsbD) reaction center heterodimer binds P680, the primary electron donor of PSII as well as several subsequent electron acceptors. This Lemna minor (Common duckweed) protein is Photosystem II protein D1.